Reading from the N-terminus, the 131-residue chain is Large ribosomal subunit protein bL12c (131 aa).

The tract at residues 107 to 131 is disordered; that stretch reads QGVSKDDAEASKKQLEDAGAKVKIS. Basic and acidic residues predominate over residues 110–131; sequence SKDDAEASKKQLEDAGAKVKIS.

The protein belongs to the bacterial ribosomal protein bL12 family. Homodimer. Part of the ribosomal stalk of the 50S ribosomal subunit. Forms a multimeric L10(L12)X complex, where L10 forms an elongated spine to which 2 to 4 L12 dimers bind in a sequential fashion. Binds GTP-bound translation factors.

Its subcellular location is the plastid. The protein localises to the chloroplast. In terms of biological role, forms part of the ribosomal stalk which helps the ribosome interact with GTP-bound translation factors. Is thus essential for accurate translation. This Chlorella vulgaris (Green alga) protein is Large ribosomal subunit protein bL12c.